A 975-amino-acid chain; its full sequence is 26S proteasome non-ATPase regulatory subunit 1 (975 aa).

The segment at 272–303 (EKKSTTTTTTTPASDSMEIDIDSGNEKSGGSS) is disordered. PC repeat units follow at residues 393 to 426 (SAISSLGVINKGHIKESKSLLKTYLPGASVNQTP), 431 to 464 (GSLYALGLIHASHGEEIIDYLVEKLHINNAILHH), 465 to 499 (GASLGLGLAAMATGRDDLYEDLKSVLYNDDAVSGE), 500 to 534 (AAGLAMGLVMLGSGAKKAIEEMLAYAHETQHEKTI), 536 to 569 (SLSMGLAFLMYGKEESADTLIEQMIGDKDPLIRY), 570 to 605 (GGMYAIAFAYCGTGHNDALRKLLHVAVSDGTDSVRR), 606 to 638 (AAVTCIGFVLSRQPEKCPKAIALLAESYNPHVR), 640 to 674 (GAAFALGIACAGTGQRDALEILKSLTTDSVGYVKQ), 675 to 715 (AAWI…DSMS), and 718 to 748 (GAVLAFGVIDAGGRNSTIQLHSPSGHKNMNA). 2 disordered regions span residues 832–882 (SSRS…KSNP) and 922–975 (PEQL…EFTE). Basic and acidic residues-rich tracts occupy residues 842–880 (DVEKKEKEEKEAKEKEAKEKEEKEAAKAEEKEPLFERKS) and 926–935 (VVKEKPETKQ). Low complexity predominate over residues 944–961 (TATATASLPNATTTTSPT).

This sequence belongs to the proteasome subunit S1 family.

Its function is as follows. Acts as a regulatory subunit of the 26 proteasome which is involved in the ATP-dependent degradation of ubiquitinated proteins. The chain is 26S proteasome non-ATPase regulatory subunit 1 (psmD1) from Dictyostelium discoideum (Social amoeba).